Reading from the N-terminus, the 151-residue chain is Cytochrome c-type biogenesis protein CcmE 2 (151 aa).

Over 1-8 (MNPLRKKR) the chain is Cytoplasmic. The chain crosses the membrane as a helical; Signal-anchor for type II membrane protein span at residues 9-29 (LVIILAILVGVGAAVGLALSA). At 30-151 (LQQNINLFYT…QSAPAPGKEG (122 aa)) the chain is on the periplasmic side. Heme contacts are provided by H124 and Y128.

Belongs to the CcmE/CycJ family.

Its subcellular location is the cell inner membrane. Its function is as follows. Heme chaperone required for the biogenesis of c-type cytochromes. Transiently binds heme delivered by CcmC and transfers the heme to apo-cytochromes in a process facilitated by CcmF and CcmH. This Pseudomonas fluorescens (strain Pf0-1) protein is Cytochrome c-type biogenesis protein CcmE 2.